The chain runs to 192 residues: MKRLEVSNQAKLPTQFGEFYIQCFREKNSNGSKDHLVIFTLDFPENPLVRLHSECLTGDALGSQKCDCGVALQMALERISKEGGLVIYLRQEGRGIGLFNKVNAYALQDKGYDTIQANEMIGFKDDERDYGIAGEILEYYRIKKMRLLTNNPKKIAALEKYAEVTRESLIVCANEHNQGYLEVKKLKMGHLL.

A GTP-binding site is contributed by 50-54 (RLHSE). Zn(2+)-binding residues include C55, C66, and C68. GTP is bound by residues 92–94 (EGR) and T114. Catalysis depends on D126, which acts as the Proton acceptor. R128 acts as the Nucleophile in catalysis. GTP is bound by residues T149 and K154.

The protein belongs to the GTP cyclohydrolase II family. The cofactor is Zn(2+).

The catalysed reaction is GTP + 4 H2O = 2,5-diamino-6-hydroxy-4-(5-phosphoribosylamino)-pyrimidine + formate + 2 phosphate + 3 H(+). The protein operates within cofactor biosynthesis; riboflavin biosynthesis; 5-amino-6-(D-ribitylamino)uracil from GTP: step 1/4. Functionally, catalyzes the conversion of GTP to 2,5-diamino-6-ribosylamino-4(3H)-pyrimidinone 5'-phosphate (DARP), formate and pyrophosphate. The sequence is that of GTP cyclohydrolase-2 from Helicobacter acinonychis (strain Sheeba).